We begin with the raw amino-acid sequence, 106 residues long: GQPKAAPSVTLFPPSSEELQANKATLVCLISDFYPGAVTVAWKADSSPVKAGVETTTPSKQSNNKYAASSYLSLTPEQWKSHKSYSCQVTHEGSTVEKTVAPTECS.

The 95-residue stretch at 7–101 (PSVTLFPPSS…EGSTVEKTVA (95 aa)) folds into the Ig-like domain. An intrachain disulfide couples Cys28 to Cys87.

In terms of assembly, immunoglobulins are composed of two identical heavy chains and two identical light chains; disulfide-linked.

The protein localises to the secreted. Its subcellular location is the cell membrane. Constant region of immunoglobulin light chains. Immunoglobulins, also known as antibodies, are membrane-bound or secreted glycoproteins produced by B lymphocytes. In the recognition phase of humoral immunity, the membrane-bound immunoglobulins serve as receptors which, upon binding of a specific antigen, trigger the clonal expansion and differentiation of B lymphocytes into immunoglobulins-secreting plasma cells. Secreted immunoglobulins mediate the effector phase of humoral immunity, which results in the elimination of bound antigens. The antigen binding site is formed by the variable domain of one heavy chain, together with that of its associated light chain. Thus, each immunoglobulin has two antigen binding sites with remarkable affinity for a particular antigen. The variable domains are assembled by a process called V-(D)-J rearrangement and can then be subjected to somatic hypermutations which, after exposure to antigen and selection, allow affinity maturation for a particular antigen. The chain is Immunoglobulin lambda constant 3 from Homo sapiens (Human).